The primary structure comprises 151 residues: NAD(P)H-quinone oxidoreductase subunit N (151 aa).

It belongs to the complex I NdhN subunit family. NDH-1 can be composed of about 15 different subunits; different subcomplexes with different compositions have been identified which probably have different functions.

The protein localises to the cellular thylakoid membrane. It catalyses the reaction a plastoquinone + NADH + (n+1) H(+)(in) = a plastoquinol + NAD(+) + n H(+)(out). The catalysed reaction is a plastoquinone + NADPH + (n+1) H(+)(in) = a plastoquinol + NADP(+) + n H(+)(out). In terms of biological role, NDH-1 shuttles electrons from an unknown electron donor, via FMN and iron-sulfur (Fe-S) centers, to quinones in the respiratory and/or the photosynthetic chain. The immediate electron acceptor for the enzyme in this species is believed to be plastoquinone. Couples the redox reaction to proton translocation, and thus conserves the redox energy in a proton gradient. Cyanobacterial NDH-1 also plays a role in inorganic carbon-concentration. The protein is NAD(P)H-quinone oxidoreductase subunit N of Acaryochloris marina (strain MBIC 11017).